We begin with the raw amino-acid sequence, 289 residues long: Light-independent protochlorophyllide reductase iron-sulfur ATP-binding protein (289 aa).

ATP is bound by residues 10 to 15 (GIGKST) and Lys-39. Residue Ser-14 participates in Mg(2+) binding. [4Fe-4S] cluster is bound by residues Cys-95 and Cys-129. 180 to 181 (NR) is a binding site for ATP.

The protein belongs to the NifH/BchL/ChlL family. As to quaternary structure, homodimer. Protochlorophyllide reductase is composed of three subunits; ChlL, ChlN and ChlB. Requires [4Fe-4S] cluster as cofactor.

The protein resides in the plastid. It localises to the chloroplast. It catalyses the reaction chlorophyllide a + oxidized 2[4Fe-4S]-[ferredoxin] + 2 ADP + 2 phosphate = protochlorophyllide a + reduced 2[4Fe-4S]-[ferredoxin] + 2 ATP + 2 H2O. It functions in the pathway porphyrin-containing compound metabolism; chlorophyll biosynthesis (light-independent). Component of the dark-operative protochlorophyllide reductase (DPOR) that uses Mg-ATP and reduced ferredoxin to reduce ring D of protochlorophyllide (Pchlide) to form chlorophyllide a (Chlide). This reaction is light-independent. The L component serves as a unique electron donor to the NB-component of the complex, and binds Mg-ATP. The polypeptide is Light-independent protochlorophyllide reductase iron-sulfur ATP-binding protein (Tetradesmus obliquus (Green alga)).